A 454-amino-acid polypeptide reads, in one-letter code: G-protein coupled receptor 39 (454 aa).

Topologically, residues 1–34 (MASPSHPSRDCSQVIDHSHVPEFEVATWIKITLI) are extracellular. Disulfide bonds link Cys-11/Cys-191 and Cys-108/Cys-210. Residues His-17 and His-19 each coordinate Zn(2+). Residues 35–55 (LVYLVIFVVGILGNSVTIRVT) form a helical membrane-spanning segment. At 56–69 (QVLQKKGYLQKEVT) the chain is on the cytoplasmic side. The chain crosses the membrane as a helical span at residues 70 to 89 (DHMVSLACSDILVFLIGMPM). The Extracellular portion of the chain corresponds to 90–109 (EFYSIIWNPLTTPSYTVSCK). A helical membrane pass occupies residues 110–131 (VHTFLFEACSYATLLHVLTLSF). The Cytoplasmic segment spans residues 132 to 151 (ERYIAICHPFRYKAMSGPCQ). Residues 152-172 (VKLLIGFVWVTSALVALPLLF) traverse the membrane as a helical segment. Residues 173-217 (AMGVEYPLVNVPSHRGLICNRSRTRHQEQPESSNMSICTNLSSRW) lie on the Extracellular side of the membrane. N-linked (GlcNAc...) asparagine glycans are attached at residues Asn-192, Asn-206, and Asn-212. A helical transmembrane segment spans residues 218–242 (TVFQSSIFSAFVVYLVVLVSVAFMC). The Cytoplasmic portion of the chain corresponds to 243–283 (WSMMQVLRRSKQGTLAAQGQQLQLRKLESQESRSARRQTII). The helical transmembrane segment at 284–305 (FLELIVVTLAVCWMPNQVRRIM) threads the bilayer. Over 306–323 (AAAKPKHDWTKSYFRAYM) the chain is Extracellular. A helical transmembrane segment spans residues 324 to 344 (ILLPFSDTFFYLSSVVNPLLY). The Cytoplasmic segment spans residues 345-454 (NVSSQQFRSV…TRNGFQEHEV (110 aa)). Phosphoserine is present on Ser-397. Residues 415–454 (HSEAKPESKPQELSCESPEPNSERKPANPATRNGFQEHEV) form a disordered region.

The protein belongs to the G-protein coupled receptor 1 family. In terms of assembly, interacts with HTR1A. Interacts with GALR1. Detected in liver, kidney, abomasum, uterus, small intestine and colon.

The protein localises to the cell membrane. Zinc-sensing receptor that can sense changes in extracellular Zn(2+), mediate Zn(2+) signal transmission, and participates in the regulation of numerous physiological processes including glucose homeostasis regulation, gastrointestinal mobility, hormone secretion and cell death. Activation by Zn(2+) in keratinocytes increases the intracellular concentration of Ca(2+) and activates the ERK/MAPK and PI3K/AKT signaling pathways leading to epithelial repair. Plays an essential role in normal wound healing by inducing the production of cytokines including the major inflammatory cytokine IL6 via the PKC/MAPK/CEBPB pathway. Regulates adipose tissue metabolism, especially lipolysis, and regulates the function of lipases, such as hormone-sensitive lipase and adipose triglyceride lipase. Plays a role in the inhibition of cell death and protects against oxidative, endoplasmic reticulum and mitochondrial stress by inducing secretion of the cytoprotective pigment epithelium-derived growth factor (PEDF) and probably other protective transcripts in a GNA13/RHOA/SRE-dependent manner. Forms dynamic heteroreceptor complexes with HTR1A and GALR1 depending on cell type or specific physiological states, resulting in signaling diversity: HTR1A-GPR39 shows additive increase in signaling along the serum response element (SRE) and NF-kappa-B pathways while GALR1 acts as an antagonist blocking SRE. This is G-protein coupled receptor 39 (GPR39) from Bos taurus (Bovine).